The sequence spans 571 residues: MEVTQTVKSYRIKKIEEIGKMTALSQEEIISNTKTVIQGLDTLKNEHNQILNSLLTSMKTIRKENGDTNLVEEKANILKKSVDSIELGLGEAQVMMALANHLQHTEAEKQKLRAQVRRLCQENAWLRDELANTQQKLQMSEQKVATIEEEKKHLEFMNEMKKYDTNEAQVNEEKESEQSSLDLGFPDDDDDGGQPEVLSPTQPSAMAQAASGGCEIPARLRTLHNLVIQYASQGRYEVAVPLCKQALEDLEKTSGHDHPDVATMLNILALVYRDQGKYKEAANLLNDALGIREKTLGPDHPAVAATLNNLAVLYGKRGKYKDAEPLCKRALVIREKVLGKDHPDVAKQLNNLALLCQNQGKYEEVERYYQRALEIYQKELGPDDPNVAKTKNNLASAYLKQGKYKQAEILYKEVLTRAHEKEFGKVDDDNKPIWMQAEEREENKAKYKDGAPQPDYGSWLKAVKVDSPTVTTTLKNLGALYRRQGKYEAAETLEECALRSRKSALEVVRQTKISDVLGSDFSKGQSPKDRKRSNSRDRNRRDSMDSVSYEKSGDGDEHEKSKLHVGTSHKQ.

Positions 54–160 form a coiled coil; sequence LLTSMKTIRK…KKHLEFMNEM (107 aa). Residues 167–177 show a composition bias toward basic and acidic residues; that stretch reads EAQVNEEKESE. The disordered stretch occupies residues 167–210; the sequence is EAQVNEEKESEQSSLDLGFPDDDDDGGQPEVLSPTQPSAMAQAA. TPR repeat units lie at residues 220-253, 262-295, 304-337, 346-379, 388-421, and 471-504; these read LRTL…LEKT, ATML…REKT, AATL…REKV, AKQL…YQKE, AKTK…AHEK, and TTTL…RKSA. The segment at 518-571 is disordered; the sequence is GSDFSKGQSPKDRKRSNSRDRNRRDSMDSVSYEKSGDGDEHEKSKLHVGTSHKQ. 2 stretches are compositionally biased toward basic and acidic residues: residues 526–544 and 551–562; these read SPKD…RDSM and KSGDGDEHEKSK.

The protein belongs to the kinesin light chain family. Oligomeric complex composed of two heavy chains and two light chains.

The protein resides in the cytoplasm. Its subcellular location is the cytoskeleton. Its function is as follows. Kinesin is a microtubule-associated force-producing protein that may play a role in organelle transport. The light chain may function in coupling of cargo to the heavy chain or in the modulation of its ATPase activity. This chain is Kinesin light chain, found in Doryteuthis pealeii (Longfin inshore squid).